We begin with the raw amino-acid sequence, 188 residues long: Large ribosomal subunit protein eL18 (188 aa).

The segment at 151–188 (HFGPAPGVPHSHTKPLVRSKGRKFERARGRRKSCGYKK) is disordered. Composition is skewed to basic residues over residues 161 to 171 (SHTKPLVRSKG) and 178 to 188 (RGRRKSCGYKK).

This sequence belongs to the eukaryotic ribosomal protein eL18 family.

Its subcellular location is the cytoplasm. This chain is Large ribosomal subunit protein eL18 (RpL18), found in Lysiphlebus testaceipes (Greenbugs aphid parastoid).